The sequence spans 691 residues: DNA ligase (691 aa).

Residues 41–45 (DAEYD), 90–91 (SL), and glutamate 130 each bind NAD(+). Residue lysine 132 is the N6-AMP-lysine intermediate of the active site. Positions 153, 190, 307, and 331 each coordinate NAD(+). Zn(2+) contacts are provided by cysteine 425, cysteine 428, cysteine 443, and cysteine 449. A BRCT domain is found at 610-691 (APQGVLAGKT…LHQLLEGNTP (82 aa)).

This sequence belongs to the NAD-dependent DNA ligase family. LigA subfamily. Mg(2+) is required as a cofactor. Mn(2+) serves as cofactor.

The catalysed reaction is NAD(+) + (deoxyribonucleotide)n-3'-hydroxyl + 5'-phospho-(deoxyribonucleotide)m = (deoxyribonucleotide)n+m + AMP + beta-nicotinamide D-nucleotide.. In terms of biological role, DNA ligase that catalyzes the formation of phosphodiester linkages between 5'-phosphoryl and 3'-hydroxyl groups in double-stranded DNA using NAD as a coenzyme and as the energy source for the reaction. It is essential for DNA replication and repair of damaged DNA. The sequence is that of DNA ligase from Burkholderia ambifaria (strain MC40-6).